A 200-amino-acid chain; its full sequence is Integrin beta-1-binding protein 1 (200 aa).

Basic residues predominate over residues 1-10 (MFRKGKKRHS). Residues 1-55 (MFRKGKKRHSSSSSQSSEISTKSKSVDSSLGGLSRSSTVASLDTDSTKSSGQSNS) are disordered. Positions 6 to 7 (KK) match the Nuclear localization signal motif. A compositionally biased stretch (low complexity) spans 11-29 (SSSSQSSEISTKSKSVDSS). A compositionally biased stretch (polar residues) spans 34–55 (SRSSTVASLDTDSTKSSGQSNS). T38 carries the post-translational modification Phosphothreonine; by CaMK2. Phosphoserine is present on S41. Positions 58–200 (DTCAEFRIKY…FDSVLTSDKS (143 aa)) constitute a PID domain. The interaction with KRIT1 stretch occupies residues 136–139 (YLII). An interaction with ITGB1 region spans residues 139–141 (IRM).

Found in a complex, at least composed of ITGB1BP1, KRIT1 and RAP1A. Interacts (via C-terminal region) with ITGB1 (via C-terminal cytoplasmic tail); the interaction prevents talin TLN1 binding to ITGB1 and KRIT1 and ITGB1 compete for the same binding site. Interacts with KRIT1 (via N-terminal NPXY motif); the interaction induces the opening conformation of KRIT1 and KRIT1 and ITGB1 compete for the same binding site. Isoform 2 does not interact with ITGB1. Interacts with CDC42 (GTP- or GDP-bound form); the interaction is increased with the CDC42-membrane bound forms and prevents both CDC42 activation and cell spreading. Interacts (via C-terminal domain region) with NME2. Interacts with FERMT2 and RAC1. Interacts (via N-terminus and PTB domain) with ROCK1. In terms of processing, phosphorylation at Thr-38 seems to enhance integrin alpha5beta1-mediated cell adhesion. The degree of phosphorylation is regulated by integrin-dependent cell-matrix interaction. In terms of tissue distribution, expressed in the brain.

The protein resides in the nucleus. It localises to the cytoplasm. The protein localises to the cytoskeleton. It is found in the cell membrane. Its subcellular location is the cell projection. The protein resides in the lamellipodium. It localises to the ruffle. In terms of biological role, key regulator of the integrin-mediated cell-matrix interaction signaling by binding to the ITGB1 cytoplasmic tail and preventing the activation of integrin alpha-5/beta-1 (heterodimer of ITGA5 and ITGB1) by talin or FERMT1. Plays a role in cell proliferation, differentiation, spreading, adhesion and migration in the context of mineralization and bone development and angiogenesis. Stimulates cellular proliferation in a fibronectin-dependent manner. Involved in the regulation of beta-1 integrin-containing focal adhesion (FA) site dynamics by controlling its assembly rate during cell adhesion; inhibits beta-1 integrin clustering within FA by directly competing with talin TLN1, and hence stimulates osteoblast spreading and migration in a fibronectin- and/or collagen-dependent manner. Acts as a guanine nucleotide dissociation inhibitor (GDI) by regulating Rho family GTPases during integrin-mediated cell matrix adhesion; reduces the level of active GTP-bound form of both CDC42 and RAC1 GTPases upon cell adhesion to fibronectin. Stimulates the release of active CDC42 from the membranes to maintain it in an inactive cytoplasmic pool. Participates in the translocation of the Rho-associated protein kinase ROCK1 to membrane ruffles at cell leading edges of the cell membrane, leading to an increase of myoblast cell migration on laminin. Plays a role in bone mineralization at a late stage of osteoblast differentiation; modulates the dynamic formation of focal adhesions into fibrillar adhesions, which are adhesive structures responsible for fibronectin deposition and fibrillogenesis. Plays a role in blood vessel development; acts as a negative regulator of angiogenesis by attenuating endothelial cell proliferation and migration, lumen formation and sprouting angiogenesis by promoting AKT phosphorylation and inhibiting ERK1/2 phosphorylation through activation of the Notch signaling pathway. Promotes transcriptional activity of the MYC promoter. This is Integrin beta-1-binding protein 1 (Itgb1bp1) from Mus musculus (Mouse).